A 226-amino-acid polypeptide reads, in one-letter code: Uridylate kinase (226 aa).

6-10 (KISGK) serves as a coordination point for ATP. Gly-43 is a UMP binding site. ATP-binding residues include Gly-44 and Arg-48. UMP is bound by residues Asp-65 and 113 to 119 (FQPGQST). Positions 139, 140, 145, and 148 each coordinate ATP.

This sequence belongs to the UMP kinase family. Homohexamer.

Its subcellular location is the cytoplasm. It carries out the reaction UMP + ATP = UDP + ADP. It functions in the pathway pyrimidine metabolism; CTP biosynthesis via de novo pathway; UDP from UMP (UMPK route): step 1/1. Inhibited by UTP. Catalyzes the reversible phosphorylation of UMP to UDP. The chain is Uridylate kinase from Saccharolobus islandicus (strain Y.N.15.51 / Yellowstone #2) (Sulfolobus islandicus).